The chain runs to 1434 residues: DNA-directed RNA polymerase subunit beta' (1434 aa).

Zn(2+) contacts are provided by C70, C72, C85, and C88. Mg(2+) contacts are provided by D460, D462, and D464. Residues C840, C915, C922, and C925 each coordinate Zn(2+).

The protein belongs to the RNA polymerase beta' chain family. In terms of assembly, the RNAP catalytic core consists of 2 alpha, 1 beta, 1 beta' and 1 omega subunit. When a sigma factor is associated with the core the holoenzyme is formed, which can initiate transcription. Mg(2+) is required as a cofactor. Zn(2+) serves as cofactor.

The catalysed reaction is RNA(n) + a ribonucleoside 5'-triphosphate = RNA(n+1) + diphosphate. DNA-dependent RNA polymerase catalyzes the transcription of DNA into RNA using the four ribonucleoside triphosphates as substrates. The protein is DNA-directed RNA polymerase subunit beta' of Aeromonas hydrophila subsp. hydrophila (strain ATCC 7966 / DSM 30187 / BCRC 13018 / CCUG 14551 / JCM 1027 / KCTC 2358 / NCIMB 9240 / NCTC 8049).